The sequence spans 215 residues: Protein-L-isoaspartate O-methyltransferase (215 aa).

The active site involves serine 62.

The protein belongs to the methyltransferase superfamily. L-isoaspartyl/D-aspartyl protein methyltransferase family.

It localises to the cytoplasm. The enzyme catalyses [protein]-L-isoaspartate + S-adenosyl-L-methionine = [protein]-L-isoaspartate alpha-methyl ester + S-adenosyl-L-homocysteine. Catalyzes the methyl esterification of L-isoaspartyl residues in peptides and proteins that result from spontaneous decomposition of normal L-aspartyl and L-asparaginyl residues. It plays a role in the repair and/or degradation of damaged proteins. This is Protein-L-isoaspartate O-methyltransferase from Ruegeria pomeroyi (strain ATCC 700808 / DSM 15171 / DSS-3) (Silicibacter pomeroyi).